The chain runs to 147 residues: Diuretic hormone 45 (147 aa).

Positions 1–26 (MMWWAVWCAAMVAGSVFTAAAPPTDS) are cleaved as a signal peptide. A propeptide spanning residues 27-84 (IDLMQMDPSLADDESLGFAMQSLSGRYAAAPWLYLLADVSHDPQRMAEFSQSSGRARP) is cleaved from the precursor. Val-131 carries the post-translational modification Valine amide. Positions 135 to 147 (GAWGEPASYLYNN) are excised as a propeptide.

It belongs to the sauvagine/corticotropin-releasing factor/urotensin I family.

It is found in the secreted. Regulation of fluid secretion. This Bombyx mori (Silk moth) protein is Diuretic hormone 45 (dh45).